Reading from the N-terminus, the 1702-residue chain is DNA polymerase (1702 aa).

DOD-type homing endonuclease domains lie at 776 to 909 (LLGY…SLGI) and 1229 to 1368 (LVGL…IVGI).

The protein belongs to the DNA polymerase type-B family. Post-translationally, this protein undergoes a protein self splicing that involves a post-translational excision of the two intervening regions (inteins) followed by peptide ligation.

The catalysed reaction is DNA(n) + a 2'-deoxyribonucleoside 5'-triphosphate = DNA(n+1) + diphosphate. Functionally, in addition to polymerase activity, this DNA polymerase exhibits 3' to 5' exonuclease activity. Its function is as follows. Intein encoded endonucleases are thought to mediate intein mobility by site-specific recombination initiated by endonuclease cleavage at the 'homing site' in gene that lack the intein. This chain is DNA polymerase (pol), found in Thermococcus litoralis.